The chain runs to 278 residues: Formamidopyrimidine-DNA glycosylase (278 aa).

P2 functions as the Schiff-base intermediate with DNA in the catalytic mechanism. E3 acts as the Proton donor in catalysis. K59 acts as the Proton donor; for beta-elimination activity in catalysis. Residues H94, R113, and K154 each contribute to the DNA site. An FPG-type zinc finger spans residues 239-273; that stretch reads KVHTKKGEFCIKCSSKIEKIKFKGRGTYFCPTCQK. The active-site Proton donor; for delta-elimination activity is R263.

This sequence belongs to the FPG family. As to quaternary structure, monomer. Zn(2+) is required as a cofactor.

It carries out the reaction Hydrolysis of DNA containing ring-opened 7-methylguanine residues, releasing 2,6-diamino-4-hydroxy-5-(N-methyl)formamidopyrimidine.. The catalysed reaction is 2'-deoxyribonucleotide-(2'-deoxyribose 5'-phosphate)-2'-deoxyribonucleotide-DNA = a 3'-end 2'-deoxyribonucleotide-(2,3-dehydro-2,3-deoxyribose 5'-phosphate)-DNA + a 5'-end 5'-phospho-2'-deoxyribonucleoside-DNA + H(+). Functionally, involved in base excision repair of DNA damaged by oxidation or by mutagenic agents. Acts as a DNA glycosylase that recognizes and removes damaged bases. Has a preference for oxidized purines, such as 7,8-dihydro-8-oxoguanine (8-oxoG). Has AP (apurinic/apyrimidinic) lyase activity and introduces nicks in the DNA strand. Cleaves the DNA backbone by beta-delta elimination to generate a single-strand break at the site of the removed base with both 3'- and 5'-phosphates. The polypeptide is Formamidopyrimidine-DNA glycosylase (mutM) (Mycoplasmopsis pulmonis (strain UAB CTIP) (Mycoplasma pulmonis)).